The following is a 98-amino-acid chain: DNA-binding protein HU (98 aa).

It belongs to the bacterial histone-like protein family. In terms of assembly, homodimer.

Its function is as follows. Histone-like DNA-binding protein which is capable of wrapping DNA to stabilize it, and thus to prevent its denaturation under extreme environmental conditions. The polypeptide is DNA-binding protein HU (hup) (Campylobacter jejuni subsp. jejuni serotype O:2 (strain ATCC 700819 / NCTC 11168)).